The sequence spans 230 residues: Uracil-DNA glycosylase (230 aa).

Aspartate 72 (proton acceptor) is an active-site residue.

The protein belongs to the uracil-DNA glycosylase (UDG) superfamily. UNG family.

The protein localises to the cytoplasm. It carries out the reaction Hydrolyzes single-stranded DNA or mismatched double-stranded DNA and polynucleotides, releasing free uracil.. Its function is as follows. Excises uracil residues from the DNA which can arise as a result of misincorporation of dUMP residues by DNA polymerase or due to deamination of cytosine. The protein is Uracil-DNA glycosylase of Wolinella succinogenes (strain ATCC 29543 / DSM 1740 / CCUG 13145 / JCM 31913 / LMG 7466 / NCTC 11488 / FDC 602W) (Vibrio succinogenes).